The primary structure comprises 145 residues: D-aminoacyl-tRNA deacylase (145 aa).

A Gly-cisPro motif, important for rejection of L-amino acids motif is present at residues 137–138 (GP).

This sequence belongs to the DTD family. In terms of assembly, homodimer.

The protein resides in the cytoplasm. It carries out the reaction glycyl-tRNA(Ala) + H2O = tRNA(Ala) + glycine + H(+). The catalysed reaction is a D-aminoacyl-tRNA + H2O = a tRNA + a D-alpha-amino acid + H(+). Its function is as follows. An aminoacyl-tRNA editing enzyme that deacylates mischarged D-aminoacyl-tRNAs. Also deacylates mischarged glycyl-tRNA(Ala), protecting cells against glycine mischarging by AlaRS. Acts via tRNA-based rather than protein-based catalysis; rejects L-amino acids rather than detecting D-amino acids in the active site. By recycling D-aminoacyl-tRNA to D-amino acids and free tRNA molecules, this enzyme counteracts the toxicity associated with the formation of D-aminoacyl-tRNA entities in vivo and helps enforce protein L-homochirality. This chain is D-aminoacyl-tRNA deacylase, found in Limosilactobacillus fermentum (strain NBRC 3956 / LMG 18251) (Lactobacillus fermentum).